We begin with the raw amino-acid sequence, 264 residues long: MIVVKAGGRTLLNNMDEIVKSISRLEKAVFVHGGGDLVDEWERKMGMEPQFKVSASGIKFRYTDEKELEVFVAVLGGLLNKKIVASFASYGRGAVGLTGADGPSVIAERKKKVIVQEKVGERLVKRAIAGGYTGKIKEVKTDLIKALVERGLVPVVAPIALSPEGELLNVNGDQMAAELAKALSAEYLVLLTDVPGVLMDGKVVPEIKSSEAEEVAKKVGPGMNIKIIMAGRVASGGTKVVICDGTVPDPLKCLEERSGTWVVP.

Substrate contacts are provided by residues 34-35 (GG), R61, and N169.

It belongs to the acetylglutamate kinase family. LysZ subfamily.

The protein resides in the cytoplasm. The catalysed reaction is [amino-group carrier protein]-C-terminal-N-(1,4-dicarboxybutan-1-yl)-L-glutamine + ATP = [amino-group carrier protein]-C-terminal-N-(1-carboxy-5-phosphooxy-5-oxopentan-1-yl)-L-glutamine + ADP. It carries out the reaction [amino-group carrier protein]-C-terminal-gamma-(L-glutamyl)-L-glutamate + ATP = [amino-group carrier protein]-C-terminal-gamma-(5-phospho-L-glutamyl)-L-glutamate + ADP. The protein operates within amino-acid biosynthesis; L-lysine biosynthesis via AAA pathway; L-lysine from L-alpha-aminoadipate (Thermus route): step 2/5. It functions in the pathway amino-acid biosynthesis; L-arginine biosynthesis. Functionally, involved in both the arginine and lysine biosynthetic pathways. Phosphorylates the LysW-bound precursors glutamate (for arginine biosynthesis), respectively alpha-aminoadipate (for lysine biosynthesis). This is Putative [LysW]-aminoadipate/[LysW]-glutamate kinase from Ignicoccus hospitalis (strain KIN4/I / DSM 18386 / JCM 14125).